Reading from the N-terminus, the 196-residue chain is 7-methyl-GTP pyrophosphatase (196 aa).

The Proton acceptor role is filled by aspartate 72.

The protein belongs to the Maf family. YceF subfamily. It depends on a divalent metal cation as a cofactor.

It is found in the cytoplasm. The catalysed reaction is N(7)-methyl-GTP + H2O = N(7)-methyl-GMP + diphosphate + H(+). In terms of biological role, nucleoside triphosphate pyrophosphatase that hydrolyzes 7-methyl-GTP (m(7)GTP). May have a dual role in cell division arrest and in preventing the incorporation of modified nucleotides into cellular nucleic acids. This chain is 7-methyl-GTP pyrophosphatase, found in Neisseria meningitidis serogroup B (strain ATCC BAA-335 / MC58).